The sequence spans 214 residues: Urease accessory protein UreG (214 aa).

23-30 is a binding site for GTP; it reads GPVGSGKT.

It belongs to the SIMIBI class G3E GTPase family. UreG subfamily. As to quaternary structure, homodimer. UreD, UreF and UreG form a complex that acts as a GTP-hydrolysis-dependent molecular chaperone, activating the urease apoprotein by helping to assemble the nickel containing metallocenter of UreC. The UreE protein probably delivers the nickel.

The protein localises to the cytoplasm. Its function is as follows. Facilitates the functional incorporation of the urease nickel metallocenter. This process requires GTP hydrolysis, probably effectuated by UreG. The sequence is that of Urease accessory protein UreG from Bordetella bronchiseptica (strain ATCC BAA-588 / NCTC 13252 / RB50) (Alcaligenes bronchisepticus).